The primary structure comprises 879 residues: Alanine--tRNA ligase (879 aa).

Residues His566, His570, Cys668, and His672 each contribute to the Zn(2+) site.

Belongs to the class-II aminoacyl-tRNA synthetase family. Zn(2+) is required as a cofactor.

Its subcellular location is the cytoplasm. It catalyses the reaction tRNA(Ala) + L-alanine + ATP = L-alanyl-tRNA(Ala) + AMP + diphosphate. In terms of biological role, catalyzes the attachment of alanine to tRNA(Ala) in a two-step reaction: alanine is first activated by ATP to form Ala-AMP and then transferred to the acceptor end of tRNA(Ala). Also edits incorrectly charged Ser-tRNA(Ala) and Gly-tRNA(Ala) via its editing domain. This Oceanobacillus iheyensis (strain DSM 14371 / CIP 107618 / JCM 11309 / KCTC 3954 / HTE831) protein is Alanine--tRNA ligase.